The primary structure comprises 147 residues: Large ribosomal subunit protein uL15 (147 aa).

The segment at 1 to 47 (MKLHELKPAEGAVRAKRRLGRGTATGQGKTAGRGQKGQWSRSGGGVR) is disordered. Residues 23–35 (TATGQGKTAGRGQ) are compositionally biased toward gly residues.

It belongs to the universal ribosomal protein uL15 family. As to quaternary structure, part of the 50S ribosomal subunit.

Its function is as follows. Binds to the 23S rRNA. This chain is Large ribosomal subunit protein uL15, found in Clostridioides difficile (strain 630) (Peptoclostridium difficile).